Reading from the N-terminus, the 81-residue chain is Delta-conotoxin PVIA (81 aa).

The N-terminal stretch at 1–22 is a signal peptide; that stretch reads MKLTCVMIVAVLFLTAWTFVTA. A propeptide spanning residues 23–49 is cleaved from the precursor; sequence DDSKNGLENHFWKARDEMKNREASKLD. Cystine bridges form between C54–C69, C61–C73, and C68–C78. Residues P57 and P65 each carry the 4-hydroxyproline modification. G80 carries the post-translational modification Glycine amide; in form delta-conotoxin PVIA.

The difference between delta-conotoxin PVIA and [deamido]-delta-conotoxin PVIA lies in the state of amidation of Gly-80. Expressed by the venom duct.

Its subcellular location is the secreted. Its function is as follows. Delta-conotoxins bind to site 6 of voltage-gated sodium channels (Nav) and inhibit the inactivation process. This toxin shows weak effects on rNav1.2/SCN2A (EC(50)=2.9 uM), rNav1.4/SCN4A (EC(50)=5.2 uM), hNav1.7/SCN9A (EC(50)=1.9 uM) and rNav1.7/SCN9A (EC(50)=6.4 uM). In vivo, this toxin shows different effects. In mice, injection of this toxin causes hyperactivity, rapid running, limb extension, and death. In fish, the peptide elicites spurts of rapid swimming, with twisted motions, quivering fins and the lockjaw extended mouth syndrome. Rigid paralysis and death are observed at higher doses. In mollusks, this peptide is inactive. Injection of this peptide together with the kappa-conotoxin PVIIA causes the sudden tetanus of prey (STOP) syndrome, which is a single, lethal 'fin-pop' in envenomed fish. This is Delta-conotoxin PVIA from Conus purpurascens (Purple cone).